Reading from the N-terminus, the 351-residue chain is UDP-3-O-acylglucosamine N-acyltransferase (351 aa).

The active-site Proton acceptor is His-240.

Belongs to the transferase hexapeptide repeat family. LpxD subfamily. In terms of assembly, homotrimer.

The catalysed reaction is a UDP-3-O-[(3R)-3-hydroxyacyl]-alpha-D-glucosamine + a (3R)-hydroxyacyl-[ACP] = a UDP-2-N,3-O-bis[(3R)-3-hydroxyacyl]-alpha-D-glucosamine + holo-[ACP] + H(+). The protein operates within bacterial outer membrane biogenesis; LPS lipid A biosynthesis. Its function is as follows. Catalyzes the N-acylation of UDP-3-O-acylglucosamine using 3-hydroxyacyl-ACP as the acyl donor. Is involved in the biosynthesis of lipid A, a phosphorylated glycolipid that anchors the lipopolysaccharide to the outer membrane of the cell. In Methylacidiphilum infernorum (isolate V4) (Methylokorus infernorum (strain V4)), this protein is UDP-3-O-acylglucosamine N-acyltransferase.